The following is a 128-amino-acid chain: Iron-sulfur cluster insertion protein ErpA (128 aa).

Iron-sulfur cluster-binding residues include C56, C120, and C122.

This sequence belongs to the HesB/IscA family. In terms of assembly, homodimer. Requires iron-sulfur cluster as cofactor.

Required for insertion of 4Fe-4S clusters for at least IspG. The sequence is that of Iron-sulfur cluster insertion protein ErpA from Xylella fastidiosa (strain M23).